The chain runs to 454 residues: MSLKVIILAAGKGTRMRSNLPKVLQPLAQKPLLSHVISTAQKLTNEPIITVIGHGAQRVVDVIGTDGIQYAEQLEQLGTGHAVVQGNPHYNDDDTVLILYGDVPLTQQNTLTDLLNLVDDIHPLALLTITLDNPSGYGRIVRNQHHLVQAIVEEKDASFEQKAVQEVNTGMMAVKGYYLKKWLGQLSNSNAQGEYYLTDIIEMCVQDGFEVHTTQPASEMEVLGVNNKSQLQSLERQYQAQLAEELMEQGVTVLDASRIDIRGDLTVGQDVTLDVNVIFEGTVVLEDHVSIGPNCVIKNAVIKSGTEIKSFSHIEDAQIGQNCEIGPYARLRPGTELSTGVKIGNFVETKKVQIGSGSKVNHLSYIGDTEMGAGVNIGAGTITCNYDGVNKHQTVIGDNVFIGSDSQLVAPVTIESDATIGAGSTITKDAPAGTLTLSRSKQLSIKGWQKPTKN.

Residues 1-228 (MSLKVIILAA…EMEVLGVNNK (228 aa)) are pyrophosphorylase. UDP-N-acetyl-alpha-D-glucosamine is bound by residues 8 to 11 (LAAG), K22, Q73, 78 to 79 (GT), 100 to 102 (YGD), G138, E153, N168, and N226. D102 is a binding site for Mg(2+). Mg(2+) is bound at residue N226. Residues 229–249 (SQLQSLERQYQAQLAEELMEQ) are linker. The segment at 250 to 454 (GVTVLDASRI…IKGWQKPTKN (205 aa)) is N-acetyltransferase. UDP-N-acetyl-alpha-D-glucosamine is bound by residues R332 and K350. The active-site Proton acceptor is H362. Residues Y365 and N376 each coordinate UDP-N-acetyl-alpha-D-glucosamine. Acetyl-CoA contacts are provided by residues A379, 385–386 (NY), S404, A422, and R439.

This sequence in the N-terminal section; belongs to the N-acetylglucosamine-1-phosphate uridyltransferase family. In the C-terminal section; belongs to the transferase hexapeptide repeat family. Homotrimer. Mg(2+) is required as a cofactor.

It localises to the cytoplasm. It catalyses the reaction alpha-D-glucosamine 1-phosphate + acetyl-CoA = N-acetyl-alpha-D-glucosamine 1-phosphate + CoA + H(+). The enzyme catalyses N-acetyl-alpha-D-glucosamine 1-phosphate + UTP + H(+) = UDP-N-acetyl-alpha-D-glucosamine + diphosphate. The protein operates within nucleotide-sugar biosynthesis; UDP-N-acetyl-alpha-D-glucosamine biosynthesis; N-acetyl-alpha-D-glucosamine 1-phosphate from alpha-D-glucosamine 6-phosphate (route II): step 2/2. It functions in the pathway nucleotide-sugar biosynthesis; UDP-N-acetyl-alpha-D-glucosamine biosynthesis; UDP-N-acetyl-alpha-D-glucosamine from N-acetyl-alpha-D-glucosamine 1-phosphate: step 1/1. It participates in bacterial outer membrane biogenesis; LPS lipid A biosynthesis. Functionally, catalyzes the last two sequential reactions in the de novo biosynthetic pathway for UDP-N-acetylglucosamine (UDP-GlcNAc). The C-terminal domain catalyzes the transfer of acetyl group from acetyl coenzyme A to glucosamine-1-phosphate (GlcN-1-P) to produce N-acetylglucosamine-1-phosphate (GlcNAc-1-P), which is converted into UDP-GlcNAc by the transfer of uridine 5-monophosphate (from uridine 5-triphosphate), a reaction catalyzed by the N-terminal domain. This chain is Bifunctional protein GlmU, found in Hydrogenovibrio crunogenus (strain DSM 25203 / XCL-2) (Thiomicrospira crunogena).